The chain runs to 201 residues: MPLILDQGCFVSESRFHRLAQNIKQGSRREREQKPLINDKIGFNEFILIDENGSNLGTVRRTDALKMAEEKQLDLVLIGSNPAKPIVKLLDFGRYTYDLKRKKRQSKKNQTIIQIKEVVVKPTIAKHDLEFKAKQTTGWAEKGYHVKFVVRAFGRVSTRIELIEKVFNDFYLLVEPAVEVQKPLTASSKTMYSALLVPRKK.

This sequence belongs to the IF-3 family. As to quaternary structure, monomer.

Its subcellular location is the cytoplasm. Functionally, IF-3 binds to the 30S ribosomal subunit and shifts the equilibrium between 70S ribosomes and their 50S and 30S subunits in favor of the free subunits, thus enhancing the availability of 30S subunits on which protein synthesis initiation begins. This is Translation initiation factor IF-3 from Mycoplasma pneumoniae (strain ATCC 29342 / M129 / Subtype 1) (Mycoplasmoides pneumoniae).